The primary structure comprises 245 residues: Probable phosphatase KPN78578_10290 (245 aa).

Residues His7, His9, His15, His40, Glu73, His101, His131, Asp192, and His194 each contribute to the Zn(2+) site.

Belongs to the PHP family. Homotrimer. Zn(2+) serves as cofactor.

The protein is Probable phosphatase KPN78578_10290 of Klebsiella pneumoniae subsp. pneumoniae (strain ATCC 700721 / MGH 78578).